The sequence spans 320 residues: ATP-dependent 6-phosphofructokinase (320 aa).

Glycine 11 contacts ATP. 21-25 (RAVVR) provides a ligand contact to ADP. Residues 72 to 73 (RY) and 102 to 105 (GDGS) each bind ATP. Residue aspartate 103 coordinates Mg(2+). Residue 125–127 (TID) participates in substrate binding. Residue aspartate 127 is the Proton acceptor of the active site. Arginine 154 contributes to the ADP binding site. Residues arginine 162 and 169–171 (MGR) contribute to the substrate site. Residues 185-187 (GAD), arginine 211, and 213-215 (KKH) each bind ADP. Residues glutamate 222, arginine 243, and 249–252 (HVVR) each bind substrate.

Belongs to the phosphofructokinase type A (PFKA) family. ATP-dependent PFK group I subfamily. Prokaryotic clade 'B1' sub-subfamily. In terms of assembly, homotetramer. Requires Mg(2+) as cofactor.

Its subcellular location is the cytoplasm. The enzyme catalyses beta-D-fructose 6-phosphate + ATP = beta-D-fructose 1,6-bisphosphate + ADP + H(+). Its pathway is carbohydrate degradation; glycolysis; D-glyceraldehyde 3-phosphate and glycerone phosphate from D-glucose: step 3/4. Its activity is regulated as follows. Allosterically activated by ADP and other diphosphonucleosides, and allosterically inhibited by phosphoenolpyruvate. In terms of biological role, catalyzes the phosphorylation of D-fructose 6-phosphate to fructose 1,6-bisphosphate by ATP, the first committing step of glycolysis. The chain is ATP-dependent 6-phosphofructokinase from Enterococcus faecalis (strain ATCC 700802 / V583).